Consider the following 90-residue polypeptide: MARDNGNKDRDGKRPNGGRNRKMKRKICSFCMEKSESIDYKDINKLRKYVTERGKILPRRISGNCAKHQRELTIAIKRARNIALLPFTTE.

Over residues 1 to 14 the composition is skewed to basic and acidic residues; the sequence is MARDNGNKDRDGKR. Residues 1 to 23 are disordered; the sequence is MARDNGNKDRDGKRPNGGRNRKM.

This sequence belongs to the bacterial ribosomal protein bS18 family. In terms of assembly, part of the 30S ribosomal subunit. Forms a tight heterodimer with protein bS6.

Its function is as follows. Binds as a heterodimer with protein bS6 to the central domain of the 16S rRNA, where it helps stabilize the platform of the 30S subunit. The polypeptide is Small ribosomal subunit protein bS18 (Clostridium acetobutylicum (strain ATCC 824 / DSM 792 / JCM 1419 / IAM 19013 / LMG 5710 / NBRC 13948 / NRRL B-527 / VKM B-1787 / 2291 / W)).